Reading from the N-terminus, the 277-residue chain is Bifunctional protein FolD (277 aa).

NADP(+) contacts are provided by residues 160–162, S185, and I226; that span reads GAS.

The protein belongs to the tetrahydrofolate dehydrogenase/cyclohydrolase family. Homodimer.

The catalysed reaction is (6R)-5,10-methylene-5,6,7,8-tetrahydrofolate + NADP(+) = (6R)-5,10-methenyltetrahydrofolate + NADPH. It carries out the reaction (6R)-5,10-methenyltetrahydrofolate + H2O = (6R)-10-formyltetrahydrofolate + H(+). It participates in one-carbon metabolism; tetrahydrofolate interconversion. In terms of biological role, catalyzes the oxidation of 5,10-methylenetetrahydrofolate to 5,10-methenyltetrahydrofolate and then the hydrolysis of 5,10-methenyltetrahydrofolate to 10-formyltetrahydrofolate. This Vesicomyosocius okutanii subsp. Calyptogena okutanii (strain HA) protein is Bifunctional protein FolD.